The primary structure comprises 197 residues: Segregation and condensation protein B (197 aa).

It belongs to the ScpB family. In terms of assembly, homodimer. Homodimerization may be required to stabilize the binding of ScpA to the Smc head domains. Component of a cohesin-like complex composed of ScpA, ScpB and the Smc homodimer, in which ScpA and ScpB bind to the head domain of Smc. The presence of the three proteins is required for the association of the complex with DNA.

It is found in the cytoplasm. Functionally, participates in chromosomal partition during cell division. May act via the formation of a condensin-like complex containing Smc and ScpA that pull DNA away from mid-cell into both cell halves. The polypeptide is Segregation and condensation protein B (Halalkalibacterium halodurans (strain ATCC BAA-125 / DSM 18197 / FERM 7344 / JCM 9153 / C-125) (Bacillus halodurans)).